Here is a 588-residue protein sequence, read N- to C-terminus: Nucleoporin ndc-1 (588 aa).

Residues 1 to 12 (MMGDSHSSFTTT) show a composition bias toward polar residues. The tract at residues 1–55 (MMGDSHSSFTTTTDEHLYNQFSPGRRKNDFPAASSSSSSPNLRRSPNRTVSSPRV) is disordered. The Cytoplasmic segment spans residues 1 to 79 (MMGDSHSSFT…FQAEISVRKR (79 aa)). The segment covering 31 to 48 (PAASSSSSSPNLRRSPNR) has biased composition (low complexity). Residues 80–100 (LAGAACGYLSTIFFIVTVSIL) form a helical membrane-spanning segment. Topologically, residues 101-122 (KLTIWAPFSSVQDSLAWWIYPN) are perinuclear space. Residues 123–143 (AWASIIFVGIASVAMSLFSII) form a helical membrane-spanning segment. Residues 144-159 (KFCKVDQLPRLAATDT) are Cytoplasmic-facing. A helical membrane pass occupies residues 160-180 (FALAGVALEFVTRLTFVYTAF). The Perinuclear space segment spans residues 181–190 (CVADFSFSRE). A helical transmembrane segment spans residues 191–211 (FAFVAISLAIAISSALVVFRS). Residues 212–255 (DYQLNFSHIQVNSVKTLIDFGTSLPYANISEICGIDAAISYTAA) lie on the Cytoplasmic side of the membrane. A helical transmembrane segment spans residues 256-276 (VALILVVGPMVSGFSAWWLLL). Position 277 (asparagine 277) is a topological domain, perinuclear space. The helical transmembrane segment at 278–298 (IPFHVVLFGLCFTQQFYSKIS) threads the bilayer. Residues 299–588 (MKIVNQIVMK…IRMICLTDEL (290 aa)) lie on the Cytoplasmic side of the membrane.

Belongs to the NDC1 family.

The protein localises to the nucleus. The protein resides in the nuclear pore complex. It is found in the nucleus membrane. In terms of biological role, component of the nuclear pore complex (NPC), which plays a key role in de novo assembly and insertion of NPC in the nuclear envelope. Plays a role in postmitotic nuclear pore complex assembly potentially by promoting localization of nuclear pore complex proteins to the nuclear rim. This Caenorhabditis elegans protein is Nucleoporin ndc-1.